The sequence spans 346 residues: Histidinol-phosphate aminotransferase (346 aa).

Position 206 is an N6-(pyridoxal phosphate)lysine (K206).

Belongs to the class-II pyridoxal-phosphate-dependent aminotransferase family. Histidinol-phosphate aminotransferase subfamily. As to quaternary structure, homodimer. Requires pyridoxal 5'-phosphate as cofactor.

It catalyses the reaction L-histidinol phosphate + 2-oxoglutarate = 3-(imidazol-4-yl)-2-oxopropyl phosphate + L-glutamate. The protein operates within amino-acid biosynthesis; L-histidine biosynthesis; L-histidine from 5-phospho-alpha-D-ribose 1-diphosphate: step 7/9. This is Histidinol-phosphate aminotransferase from Bacteroides thetaiotaomicron (strain ATCC 29148 / DSM 2079 / JCM 5827 / CCUG 10774 / NCTC 10582 / VPI-5482 / E50).